The chain runs to 280 residues: Late embryogenesis abundant protein M17 (280 aa).

An N-terminal signal peptide occupies residues 1-22 (MGNLKSLVLLALLFSFSVAVFA). Asparagine 23 carries an N-linked (GlcNAc...) asparagine glycan. A run of 2 repeats spans residues 76–97 (GGCR…CCRS) and 131–152 (GGCR…CCRS). Residues 76–262 (GGCRWGCCGG…RGRCRYCCRS (187 aa)) form a 4 X 22 AA repeats, Cys-rich region. Residues 163-184 (VEPNDVEPQQGGRGGGGGGGGG) are disordered. Gly residues predominate over residues 173–184 (GGRGGGGGGGGG). The stretch at 186–207 (GGCRWGCCGGWWRGRCRYCCRS) is repeat 3. The interval 218–239 (VEPNDVEPQQGGRGGGGGGGGG) is disordered. Gly residues predominate over residues 228–239 (GGRGGGGGGGGG). The stretch at 241–262 (GGCRWGCCGGWWRGRCRYCCRS) is repeat 4.

May be involved in the acquisition of desiccation tolerance during late phase of embryogenesis. This Arabidopsis thaliana (Mouse-ear cress) protein is Late embryogenesis abundant protein M17.